The sequence spans 146 residues: Mitochondrial pyruvate carrier 3 (146 aa).

Residues 1–20 (MSASAFNFAFRRFWNSETGP) constitute a mitochondrion transit peptide. 3 helical membrane-spanning segments follow: residues 23–39 (VHFW…FAGL), 55–71 (LSLL…SFVI), and 78–94 (LASV…YHLT).

It belongs to the mitochondrial pyruvate carrier (MPC) (TC 2.A.105) family. The functional 150 kDa pyruvate import complex is a heteromer of MPC1 and either MPC2 or MPC3.

It localises to the mitochondrion. The protein localises to the mitochondrion inner membrane. Mediates the uptake of pyruvate into mitochondria. The protein is Mitochondrial pyruvate carrier 3 of Saccharomyces cerevisiae (strain ATCC 204508 / S288c) (Baker's yeast).